Consider the following 483-residue polypeptide: Regulatory protein ViaA (483 aa).

Belongs to the ViaA family. In terms of assembly, homodimer. Interacts with RavA.

It is found in the cytoplasm. Functionally, component of the RavA-ViaA chaperone complex, which may act on the membrane to optimize the function of some of the respiratory chains. ViaA stimulates the ATPase activity of RavA. This is Regulatory protein ViaA from Escherichia coli O139:H28 (strain E24377A / ETEC).